A 176-amino-acid polypeptide reads, in one-letter code: 3-hydroxydecanoyl-[acyl-carrier-protein] dehydratase (176 aa).

His71 is a catalytic residue.

This sequence belongs to the thioester dehydratase family. FabA subfamily. In terms of assembly, homodimer.

It is found in the cytoplasm. The catalysed reaction is a (3R)-hydroxyacyl-[ACP] = a (2E)-enoyl-[ACP] + H2O. The enzyme catalyses (3R)-hydroxydecanoyl-[ACP] = (2E)-decenoyl-[ACP] + H2O. It carries out the reaction (2E)-decenoyl-[ACP] = (3Z)-decenoyl-[ACP]. It participates in lipid metabolism; fatty acid biosynthesis. Necessary for the introduction of cis unsaturation into fatty acids. Catalyzes the dehydration of (3R)-3-hydroxydecanoyl-ACP to E-(2)-decenoyl-ACP and then its isomerization to Z-(3)-decenoyl-ACP. Can catalyze the dehydratase reaction for beta-hydroxyacyl-ACPs with saturated chain lengths up to 16:0, being most active on intermediate chain length. The protein is 3-hydroxydecanoyl-[acyl-carrier-protein] dehydratase of Afipia carboxidovorans (strain ATCC 49405 / DSM 1227 / KCTC 32145 / OM5) (Oligotropha carboxidovorans).